A 1505-amino-acid chain; its full sequence is Probable serine/threonine-protein kinase DDB_G0280133 (1505 aa).

PAS domains are found at residues 2-72 (NTHN…FETG), 108-178 (RMFI…YHGG), and 215-284 (DMFK…TDSH). Disordered regions lie at residues 282 to 348 (DSHD…FNHS) and 398 to 533 (RVYG…ESSY). Low complexity-rich tracts occupy residues 289 to 314 (QQQQ…TTST) and 328 to 344 (SSPP…TPTT). Basic and acidic residues-rich tracts occupy residues 398–407 (RVYGKDKDKN) and 415–430 (ENKD…ESKE). The segment covering 431-443 (HRHSKEKKKRKKD) has biased composition (basic residues). Over residues 448-468 (NNNNNNNNNNNNNNEQTSDSS) the composition is skewed to low complexity. Residues 479-489 (SKKKRSSKKKS) show a composition bias toward basic residues. Positions 515-532 (SSNSSSNSSHSNAPHESS) are enriched in low complexity. The Protein kinase domain maps to 542–805 (YTLGKTLGRG…IMNVLNHPWL (264 aa)). ATP is bound by residues 548-556 (LGRGNYGVV) and K571. D684 acts as the Proton acceptor in catalysis. Low complexity predominate over residues 855-960 (NILNNNNNNN…NNTNSIINNN (106 aa)). Disordered regions lie at residues 855–1048 (NILN…SHQQ), 1072–1091 (QPNQ…QLQQ), and 1181–1358 (QQQQ…DEEN). Positions 903-939 (NNNNNINNNINNNNNVNNNVNNNKNNNNNNNNNSNNN) form a coiled coil. Residues 961–974 (LYNQSLSPQNNNIY) are compositionally biased toward polar residues. 2 stretches are compositionally biased toward low complexity: residues 975–1013 (QHSP…QQQH) and 1022–1048 (QQHQ…SHQQ). The segment covering 1072–1082 (QPNQQVSFDTN) has biased composition (polar residues). Residues 1125 to 1189 (IQQIQQLQQQ…QQQQQQQQND (65 aa)) are a coiled coil. Residues 1202–1271 (SKRDNSYNKR…NSRDNNRYNN (70 aa)) are compositionally biased toward basic and acidic residues. Over residues 1272–1282 (RDNNNNNNSNN) the composition is skewed to low complexity. 2 stretches are compositionally biased toward basic and acidic residues: residues 1283 to 1301 (NRER…DYGK) and 1313 to 1326 (NKDK…KPDF). A compositionally biased stretch (polar residues) spans 1331–1347 (SLKNDSSSNYGTISSGR). The FHA domain maps to 1399-1463 (FLFGRNRDIA…NGTFLKGEKI (65 aa)).

This sequence belongs to the protein kinase superfamily. CAMK Ser/Thr protein kinase family. SNF1 subfamily.

It carries out the reaction L-seryl-[protein] + ATP = O-phospho-L-seryl-[protein] + ADP + H(+). The catalysed reaction is L-threonyl-[protein] + ATP = O-phospho-L-threonyl-[protein] + ADP + H(+). The chain is Probable serine/threonine-protein kinase DDB_G0280133 from Dictyostelium discoideum (Social amoeba).